Here is a 130-residue protein sequence, read N- to C-terminus: Glycine cleavage system H protein (130 aa).

The region spanning 25-106 (MALIGISDFA…PFDSWMIKVK (82 aa)) is the Lipoyl-binding domain. K66 is modified (N6-lipoyllysine).

Belongs to the GcvH family. The glycine cleavage system is composed of four proteins: P, T, L and H. Requires (R)-lipoate as cofactor.

Functionally, the glycine cleavage system catalyzes the degradation of glycine. The H protein shuttles the methylamine group of glycine from the P protein to the T protein. The polypeptide is Glycine cleavage system H protein (Leptospira interrogans serogroup Icterohaemorrhagiae serovar copenhageni (strain Fiocruz L1-130)).